The chain runs to 223 residues: Peroxynitrite isomerase 1 (223 aa).

The short motif at 69–75 (GVWRGEG) is the GXWXGXG element. Residues Lys-186 and His-213 each contribute to the heme b site.

The protein belongs to the nitrobindin family. In terms of assembly, homodimer. Heme b is required as a cofactor.

The enzyme catalyses peroxynitrite = nitrate. It functions in the pathway nitrogen metabolism. Its function is as follows. Heme-binding protein able to scavenge peroxynitrite and to protect free L-tyrosine against peroxynitrite-mediated nitration, by acting as a peroxynitrite isomerase that converts peroxynitrite to nitrate. Therefore, this protein likely plays a role in peroxynitrite sensing and in the detoxification of reactive nitrogen and oxygen species (RNS and ROS, respectively). Is able to bind nitric oxide (NO) in vitro, but may act as a sensor of peroxynitrite levels in vivo. This chain is Peroxynitrite isomerase 1, found in Mycobacterium marinum (strain ATCC BAA-535 / M).